Here is a 226-residue protein sequence, read N- to C-terminus: ATP synthase F(0) complex subunit a (226 aa).

6 helical membrane passes run V13 to W33, W69 to L89, T97 to A117, I138 to V158, F179 to L199, and L201 to Y221.

The protein belongs to the ATPase A chain family. Component of the ATP synthase complex composed at least of ATP5F1A/subunit alpha, ATP5F1B/subunit beta, ATP5MC1/subunit c (homooctomer), MT-ATP6/subunit a, MT-ATP8/subunit 8, ATP5ME/subunit e, ATP5MF/subunit f, ATP5MG/subunit g, ATP5MK/subunit k, ATP5MJ/subunit j, ATP5F1C/subunit gamma, ATP5F1D/subunit delta, ATP5F1E/subunit epsilon, ATP5PF/subunit F6, ATP5PB/subunit b, ATP5PD/subunit d, ATP5PO/subunit OSCP. ATP synthase complex consists of a soluble F(1) head domain (subunits alpha(3) and beta(3)) - the catalytic core - and a membrane F(0) domain - the membrane proton channel (subunits c, a, 8, e, f, g, k and j). These two domains are linked by a central stalk (subunits gamma, delta, and epsilon) rotating inside the F1 region and a stationary peripheral stalk (subunits F6, b, d, and OSCP). Interacts with DNAJC30; interaction is direct.

Its subcellular location is the mitochondrion inner membrane. It carries out the reaction H(+)(in) = H(+)(out). Subunit a, of the mitochondrial membrane ATP synthase complex (F(1)F(0) ATP synthase or Complex V) that produces ATP from ADP in the presence of a proton gradient across the membrane which is generated by electron transport complexes of the respiratory chain. ATP synthase complex consist of a soluble F(1) head domain - the catalytic core - and a membrane F(1) domain - the membrane proton channel. These two domains are linked by a central stalk rotating inside the F(1) region and a stationary peripheral stalk. During catalysis, ATP synthesis in the catalytic domain of F(1) is coupled via a rotary mechanism of the central stalk subunits to proton translocation. With the subunit c (ATP5MC1), forms the proton-conducting channel in the F(0) domain, that contains two crucial half-channels (inlet and outlet) that facilitate proton movement from the mitochondrial intermembrane space (IMS) into the matrix. Protons are taken up via the inlet half-channel and released through the outlet half-channel, following a Grotthuss mechanism. This is ATP synthase F(0) complex subunit a from Xenopus laevis (African clawed frog).